The primary structure comprises 933 residues: Melanoma-associated antigen E1 (933 aa).

Disordered stretches follow at residues 1–113 (MSLV…VSAG), 149–236 (GASI…GINL), 256–282 (SDIS…VQST), and 360–393 (TSGL…EDEN). Over residues 8–23 (SRRRRGGRANGRKNSG) the composition is skewed to basic residues. Composition is skewed to polar residues over residues 64–97 (GGSS…QLPT), 149–166 (GASI…NVQP), 173–184 (GTSVPPTFSEES), and 219–236 (APST…GINL). MAGE domains are found at residues 467–666 (MEQN…YNEA) and 721–912 (LESK…YREA). The segment at 719-933 (SRLESKSRKL…RRPLVVRNLR (215 aa)) is interaction with DTNA.

As to quaternary structure, interacts with DTNA. Interacts with TRIM28.

Its subcellular location is the cytoplasm. The protein localises to the perinuclear region. It is found in the nucleus. The protein resides in the cell membrane. Functionally, may enhance ubiquitin ligase activity of RING-type zinc finger-containing E3 ubiquitin-protein ligases. Proposed to act through recruitment and/or stabilization of the Ubl-conjugating enzyme (E2) at the E3:substrate complex. The sequence is that of Melanoma-associated antigen E1 (Magee1) from Rattus norvegicus (Rat).